A 443-amino-acid polypeptide reads, in one-letter code: Probable nitrate/nitrite antiporter NarK1 (443 aa).

12 consecutive transmembrane segments (helical) span residues 23–43 (TLAF…GVPI), 56–76 (WISA…GILA), 79–99 (YGGR…AYLV), 108–128 (LLLY…GIAW), 142–164 (LGVF…ALIA), 182–202 (FIPF…WFGT), 230–250 (FSLY…WLPK), 255–275 (VFGL…FPAS), 298–318 (FGII…IVLY), 329–349 (FTMG…GMGI), 368–388 (AVGG…PPLF), and 401–421 (TFFV…LTVL).

It belongs to the major facilitator superfamily. Nitrate/nitrite porter (TC 2.A.1.8) family.

The protein localises to the cell membrane. It carries out the reaction nitrate(in) + nitrite(out) = nitrate(out) + nitrite(in). In terms of biological role, probable nitrate/nitrite antiporter that may be involved in nitrate import and nitrite export during anaerobic growth. The protein is Probable nitrate/nitrite antiporter NarK1 of Thermus thermophilus.